The sequence spans 637 residues: ATP-dependent zinc metalloprotease FtsH (637 aa).

Residues 1 to 6 (MNNQGR) lie on the Cytoplasmic side of the membrane. The chain crosses the membrane as a helical span at residues 7-27 (SILAWATLFIFVILLFNVFQS). Residues 28 to 103 (DSLLGGRNNI…VVPLETRMNT (76 aa)) are Periplasmic-facing. A helical transmembrane segment spans residues 104-124 (FLGFLISWFPMLLLIGVWVFF). Topologically, residues 125–637 (MRQMHGGGKA…TKAKKENYAS (513 aa)) are cytoplasmic. Residue 195–202 (GPPGTGKT) participates in ATP binding. Zn(2+) is bound at residue His-417. Residue Glu-418 is part of the active site. Zn(2+)-binding residues include His-421 and Asp-495. The interval 603 to 637 (ENKFPFNDSSTIKIDKEKSPEKTKTTKAKKENYAS) is disordered. Basic and acidic residues predominate over residues 615–637 (KIDKEKSPEKTKTTKAKKENYAS).

The protein in the central section; belongs to the AAA ATPase family. It in the C-terminal section; belongs to the peptidase M41 family. As to quaternary structure, homohexamer. It depends on Zn(2+) as a cofactor.

The protein localises to the cell inner membrane. In terms of biological role, acts as a processive, ATP-dependent zinc metallopeptidase for both cytoplasmic and membrane proteins. Plays a role in the quality control of integral membrane proteins. This chain is ATP-dependent zinc metalloprotease FtsH, found in Rickettsia conorii (strain ATCC VR-613 / Malish 7).